We begin with the raw amino-acid sequence, 5641 residues long: Cyclochlorotine synthetase (5641 aa).

A disordered region spans residues 95-124 (PENLNGHLIGSTNGHKKQWENDSADDKRGQ). Positions 111–124 (KQWENDSADDKRGQ) are enriched in basic and acidic residues. Residues 217–622 (FTENVQRYPT…GRRDTQVKIR (406 aa)) form an adenylation (A) domain 1 region. The 77-residue stretch at 816–892 (TEEEYKIQTL…DLVSNCKMSA (77 aa)) folds into the Carrier 1 domain. The thiolation (T) domain 1 stretch occupies residues 821–889 (KIQTLKEIWS…QLSDLVSNCK (69 aa)). The residue at position 853 (S853) is an O-(pantetheine 4'-phosphoryl)serine. The segment at 926 to 1333 (EDVYPCTPLQ…AHVAEQIGQP (408 aa)) is condensation (C) domain 1. The interval 1390-1768 (DGNLTFEELN…ISRATTQIKI (379 aa)) is adenylation (A) domain 2. The region spanning 1902-1978 (IELSEKQENM…QLVMIATELT (77 aa)) is the Carrier 2 domain. The interval 1907-1975 (KQENMARLWA…RFDQLVMIAT (69 aa)) is thiolation (T) domain 2. Position 1939 is an O-(pantetheine 4'-phosphoryl)serine (S1939). The tract at residues 2022–2438 (DIYACTPFQE…DLASEQDLAK (417 aa)) is condensation (C) domain 2. An adenylation (A) domain 3 region spans residues 2459–2859 (AEKARQHPNK…GRADTQVKLR (401 aa)). In terms of domain architecture, Carrier 3 spans 2976 to 3052 (GPLTEMETTL…GMAIKIQPIH (77 aa)). The thiolation (T) domain 3 stretch occupies residues 2977-3049 (PLTEMETTLA…NLAGMAIKIQ (73 aa)). S3013 carries the O-(pantetheine 4'-phosphoryl)serine modification. Positions 3089-3482 (DIYPCTPLQV…LETVLSAFST (394 aa)) are condensation (C) domain 3. Residues 3523–3873 (VQRAPDKVAI…IARKDLQVKL (351 aa)) are adenylation (A) domain 4. Residues 4005-4081 (IPSTPTEMKM…ELATKIAPRI (77 aa)) form the Carrier 4 domain. Residues 4010-4078 (TEMKMQQLWA…RLSELATKIA (69 aa)) are thiolation (T) domain 4. S4042 carries the post-translational modification O-(pantetheine 4'-phosphoryl)serine. The interval 4123 to 4549 (KDVYPCTPLQ…QSLDSLSQQD (427 aa)) is condensation (C) domain 4. Positions 4574–4982 (QEIAGRHPDA…GRIGTDIKLR (409 aa)) are adenylation (A) domain 5. One can recognise a Carrier 5 domain in the interval 5118–5194 (PPSTQEEKVI…SLAEKISWES (77 aa)). The tract at residues 5123–5191 (EEKVIAALWA…KLASLAEKIS (69 aa)) is thiolation (T) domain 5. Residue S5155 is modified to O-(pantetheine 4'-phosphoryl)serine. The segment at 5260–5556 (AYLDIGPDVQ…DKCTTCVSGS (297 aa)) is condensation (C) domain 5.

Belongs to the NRP synthetase family.

It participates in mycotoxin biosynthesis. Its function is as follows. Nonribosomal peptide synthetase; part of the gene cluster that mediates the biosynthesis of the mycotoxin cyclochlorotine, a hepatotoxic and carcinogenic cyclic chlorinated pentapeptide. Within the pathway, The NRPS cctN initially catalyzes the condensation of L-serine (Ser), Pro, L-2-aminobutyrate (2Abu), Ser, and beta-Phe in this order. During the chain elongation, side-chain hydroxy group of Ser4 would be used as a nucleophile, giving isocyclotine as a product of terminal condensation-like (CT) domain-catalyzed cyclization. After the dichlorination of Pro2 catalyzed by cctP2 to produce isocyclochlorotine, the cctO-mediated transacylation of isocyclochlorotine can furnish cyclochlorotine. The subsequent hydroxylation of cyclochlorotine by cctR yields hydroxycyclochlorotine as the final product. CctP1 probably acts as a phenylalanine aminomutase and provides the uncommon building block beta-Phe. Furthermore, 2Abu can be synthesized from threonine by one of the threonine dehydratases and transaminases localized outside of the cluster. The functions of the remaining proteins encoded by the cluster, cctM and cctT, have not been identified yet. In Talaromyces islandicus (Penicillium islandicum), this protein is Cyclochlorotine synthetase.